Reading from the N-terminus, the 167-residue chain is Xanthine-guanine phosphoribosyltransferase (167 aa).

Residues 47–48, Gln-79, and 102–110 contribute to the 5-phospho-alpha-D-ribose 1-diphosphate site; these read RG and DDLVDSGKT. Gln-79 is a binding site for GMP. Asp-103 provides a ligand contact to Mg(2+). Guanine-binding residues include Asp-106 and Ile-149. Asp-106 and Ile-149 together coordinate xanthine. Residues 106-110 and 148-149 each bind GMP; these read DSGKT and WI.

This sequence belongs to the purine/pyrimidine phosphoribosyltransferase family. XGPT subfamily. In terms of assembly, homotetramer. Requires Mg(2+) as cofactor.

The protein resides in the cell inner membrane. The enzyme catalyses GMP + diphosphate = guanine + 5-phospho-alpha-D-ribose 1-diphosphate. The catalysed reaction is XMP + diphosphate = xanthine + 5-phospho-alpha-D-ribose 1-diphosphate. It catalyses the reaction IMP + diphosphate = hypoxanthine + 5-phospho-alpha-D-ribose 1-diphosphate. It functions in the pathway purine metabolism; GMP biosynthesis via salvage pathway; GMP from guanine: step 1/1. It participates in purine metabolism; XMP biosynthesis via salvage pathway; XMP from xanthine: step 1/1. Purine salvage pathway enzyme that catalyzes the transfer of the ribosyl-5-phosphate group from 5-phospho-alpha-D-ribose 1-diphosphate (PRPP) to the N9 position of the 6-oxopurines guanine and xanthine to form the corresponding ribonucleotides GMP (guanosine 5'-monophosphate) and XMP (xanthosine 5'-monophosphate), with the release of PPi. To a lesser extent, also acts on hypoxanthine. This Cereibacter sphaeroides (strain ATCC 17029 / ATH 2.4.9) (Rhodobacter sphaeroides) protein is Xanthine-guanine phosphoribosyltransferase.